The chain runs to 122 residues: Histone H2B.2 (122 aa).

Positions methionine 1–threonine 10 are enriched in low complexity. Residues methionine 1–lysine 28 are disordered. A N,N,N-trimethylalanine modification is found at alanine 2. An N6-acetyllysine mark is found at lysine 5 and lysine 42. Lysine 116 participates in a covalent cross-link: Glycyl lysine isopeptide (Lys-Gly) (interchain with G-Cter in ubiquitin).

This sequence belongs to the histone H2B family. In terms of assembly, the nucleosome is a histone octamer containing two molecules each of H2A, H2B, H3 and H4 assembled in one H3-H4 heterotetramer and two H2A-H2B heterodimers. The octamer wraps approximately 147 bp of DNA. In terms of processing, acetylation occurs almost exclusively in the MAC. Monoubiquitination to form H2BK115ub1 gives a specific tag for epigenetic transcriptional activation and is also prerequisite for H3K4me and H3K79me formation.

It is found in the nucleus. Its subcellular location is the chromosome. Its function is as follows. Core component of nucleosome. Nucleosomes wrap and compact DNA into chromatin, limiting DNA accessibility to the cellular machineries which require DNA as a template. Histones thereby play a central role in transcription regulation, DNA repair, DNA replication and chromosomal stability. DNA accessibility is regulated via a complex set of post-translational modifications of histones, also called histone code, and nucleosome remodeling. This Tetrahymena thermophila (strain SB210) protein is Histone H2B.2 (HTB2).